Here is a 607-residue protein sequence, read N- to C-terminus: UvrABC system protein C (607 aa).

One can recognise a GIY-YIG domain in the interval 15-93; it reads RKPGVYRMLD…IKELKPPYNI (79 aa). The UVR domain maps to 203-238; sequence REVADQLSTDMEAAAAALEFEKAALLRDQLAAIQAV. The segment covering 542–551 has biased composition (basic residues); sequence HRARRGKARK. The segment at 542–561 is disordered; sequence HRARRGKARKQSTLDEIPGI.

The protein belongs to the UvrC family. In terms of assembly, interacts with UvrB in an incision complex.

Its subcellular location is the cytoplasm. In terms of biological role, the UvrABC repair system catalyzes the recognition and processing of DNA lesions. UvrC both incises the 5' and 3' sides of the lesion. The N-terminal half is responsible for the 3' incision and the C-terminal half is responsible for the 5' incision. This chain is UvrABC system protein C, found in Alcanivorax borkumensis (strain ATCC 700651 / DSM 11573 / NCIMB 13689 / SK2).